A 150-amino-acid polypeptide reads, in one-letter code: Pyruvoyl-dependent arginine decarboxylase (150 aa).

Ser-42 carries the pyruvic acid (Ser) modification.

The protein belongs to the PdaD family. It depends on pyruvate as a cofactor.

The enzyme catalyses L-arginine + H(+) = agmatine + CO2. This is Pyruvoyl-dependent arginine decarboxylase from Methanopyrus kandleri (strain AV19 / DSM 6324 / JCM 9639 / NBRC 100938).